We begin with the raw amino-acid sequence, 172 residues long: MIIYRDCISQDEMFSDIYKIREVANGLCLEVEGKMVTRTEGQIDDSLIGGNASAEGPEGEGTEATVITGVDIVINHHLQETSFTKESYKKYIKDYMKAIKARLEEHKPERVKPFMTGAAEQIKHILANFKNYQFFVGENMNPDGMVALLDFREDGVTPYMIFFKDGLEIEKC.

A TCTP domain is found at 1–172 (MIIYRDCISQ…FKDGLEIEKC (172 aa)). S46 is subject to Phosphoserine; by PLK1.

Belongs to the TCTP family.

It localises to the cytoplasm. Functionally, involved in calcium binding and microtubule stabilization. The chain is Translationally-controlled tumor protein homolog (TPT1) from Gallus gallus (Chicken).